The sequence spans 318 residues: Cuticle collagen dpy-7 (318 aa).

Triple-helical region regions lie at residues 101–130 (GPIG…DGLD), 147–206 (GPPG…PGDD), 209–235 (GGTG…NGLP), and 240–278 (GPPG…PGGH). The interval 101–318 (GPIGPPGVSG…GYSGGGYGKK (218 aa)) is disordered. A compositionally biased stretch (low complexity) spans 187–204 (PQGEPGEQGEPGIKGPPG). Composition is skewed to pro residues over residues 216–228 (PPGP…PKGP) and 250–268 (PPGP…PFGP). Over residues 309 to 318 (GYSGGGYGKK) the composition is skewed to gly residues.

Belongs to the cuticular collagen family. As to quaternary structure, collagen polypeptide chains are complexed within the cuticle by disulfide bonds and other types of covalent cross-links.

Nematode cuticles are composed largely of collagen-like proteins. The cuticle functions both as an exoskeleton and as a barrier to protect the worm from its environment. Mutations in dpy-7 affects the body shape. The chain is Cuticle collagen dpy-7 (dpy-7) from Caenorhabditis elegans.